Here is a 248-residue protein sequence, read N- to C-terminus: 2,3-bisphosphoglycerate-dependent phosphoglycerate mutase (248 aa).

Substrate contacts are provided by residues 8 to 15 (RHGESTWN), 21 to 22 (TG), Arg60, 87 to 90 (ERHY), Lys98, 114 to 115 (RR), and 183 to 184 (GN). His9 serves as the catalytic Tele-phosphohistidine intermediate. Glu87 acts as the Proton donor/acceptor in catalysis.

Belongs to the phosphoglycerate mutase family. BPG-dependent PGAM subfamily. Homodimer.

The catalysed reaction is (2R)-2-phosphoglycerate = (2R)-3-phosphoglycerate. Its pathway is carbohydrate degradation; glycolysis; pyruvate from D-glyceraldehyde 3-phosphate: step 3/5. Catalyzes the interconversion of 2-phosphoglycerate and 3-phosphoglycerate. The chain is 2,3-bisphosphoglycerate-dependent phosphoglycerate mutase from Burkholderia lata (strain ATCC 17760 / DSM 23089 / LMG 22485 / NCIMB 9086 / R18194 / 383).